Reading from the N-terminus, the 50-residue chain is uncharacterized protein (50 aa).

This is an uncharacterized protein from Dichelobacter nodosus (Bacteroides nodosus).